We begin with the raw amino-acid sequence, 362 residues long: Methylthioribose-1-phosphate isomerase (362 aa).

The active-site Proton donor is Asp252.

The protein belongs to the eIF-2B alpha/beta/delta subunits family. MtnA subfamily.

The protein localises to the cytoplasm. It is found in the nucleus. The catalysed reaction is 5-(methylsulfanyl)-alpha-D-ribose 1-phosphate = 5-(methylsulfanyl)-D-ribulose 1-phosphate. The protein operates within amino-acid biosynthesis; L-methionine biosynthesis via salvage pathway; L-methionine from S-methyl-5-thio-alpha-D-ribose 1-phosphate: step 1/6. Its function is as follows. Catalyzes the interconversion of methylthioribose-1-phosphate (MTR-1-P) into methylthioribulose-1-phosphate (MTRu-1-P). In Drosophila persimilis (Fruit fly), this protein is Methylthioribose-1-phosphate isomerase.